The chain runs to 196 residues: DnaA initiator-associating protein DiaA (196 aa).

Residues 34 to 196 form the SIS domain; that stretch reads LVQSLLNGNK…DNTLFPHQDD (163 aa).

Belongs to the SIS family. DiaA subfamily. In terms of assembly, homotetramer; dimer of dimers.

Required for the timely initiation of chromosomal replication via direct interactions with the DnaA initiator protein. The protein is DnaA initiator-associating protein DiaA of Klebsiella pneumoniae (strain 342).